Here is a 346-residue protein sequence, read N- to C-terminus: Ferredoxin--NADP reductase 1 (346 aa).

FAD contacts are provided by Glu37, Lys45, Tyr49, Ile89, Pro124, Asp287, and Ser328.

It belongs to the ferredoxin--NADP reductase type 2 family. Homodimer. Requires FAD as cofactor.

The catalysed reaction is 2 reduced [2Fe-2S]-[ferredoxin] + NADP(+) + H(+) = 2 oxidized [2Fe-2S]-[ferredoxin] + NADPH. This Bacillus pumilus (strain SAFR-032) protein is Ferredoxin--NADP reductase 1.